The primary structure comprises 917 residues: Hexokinase-1 (917 aa).

N-acetylmethionine is present on methionine 1. A mitochondrial-binding peptide (MBP) region spans residues 1-10 (MIAAQLLAYY). Hexokinase domains follow at residues 16–458 (DDQV…MVTA) and 464–906 (AEQH…LITA). ATP is bound by residues arginine 30 and 84 to 89 (DLGGSS). Residues 73–207 (DGSEKGDFIA…DYDANIVAVV (135 aa)) form a hexokinase small subdomain 1 region. 84-91 (DLGGSSFR) is a binding site for D-glucose 6-phosphate. Residues serine 155, 172-173 (TK), and 208-209 (ND) contribute to the D-glucose site. A hexokinase large subdomain 1 region spans residues 208–447 (NDTVGTMMTC…SDVRFLLSES (240 aa)). D-glucose 6-phosphate-binding residues include aspartate 209 and threonine 232. Residues asparagine 235, glutamate 260, and 291-294 (QLFE) contribute to the D-glucose site. Serine 337 bears the Phosphoserine mark. An ATP-binding site is contributed by asparagine 345. 413–415 (DGS) is a binding site for D-glucose 6-phosphate. Residue 425–426 (RR) coordinates ATP. Residues serine 449 and 532–536 (DLGGT) contribute to the D-glucose 6-phosphate site. The tract at residues 521 to 655 (DGTENGDFLA…EFDLDVVAVV (135 aa)) is hexokinase small subdomain 2. 532–537 (DLGGTN) serves as a coordination point for ATP. D-glucose is bound by residues 603-604 (SF), 620-621 (TK), and 656-657 (ND). Residues 656-895 (NDTVGTMMTC…CNVSFLLSED (240 aa)) are hexokinase large subdomain 2. D-glucose 6-phosphate is bound by residues aspartate 657 and threonine 680. Threonine 680 provides a ligand contact to ATP. D-glucose-binding positions include 682–683 (SN), glutamate 708, and glutamate 742. Residues 747–748 (GM), 784–788 (TKFLS), and 863–867 (TLYKL) contribute to the ATP site. Residues 861 to 863 (DGT) and serine 897 each bind D-glucose 6-phosphate.

The protein belongs to the hexokinase family. As to quaternary structure, monomer. Interacts with RABL2/RABL2A; binds preferentially to GTP-bound RABL2. Interacts with VDAC1. The HK1-VDAC1 complex interacts with ATF2. Interacts (via N-terminal spermatogenic cell-specific region) with PFKM (via C-terminus). Interacts with SMAD5.

Its subcellular location is the mitochondrion outer membrane. The protein localises to the cytoplasm. The protein resides in the cytosol. The enzyme catalyses a D-hexose + ATP = a D-hexose 6-phosphate + ADP + H(+). The catalysed reaction is D-fructose + ATP = D-fructose 6-phosphate + ADP + H(+). It catalyses the reaction D-glucose + ATP = D-glucose 6-phosphate + ADP + H(+). It carries out the reaction D-mannose + ATP = D-mannose 6-phosphate + ADP + H(+). The enzyme catalyses D-glucosamine + ATP = D-glucosamine 6-phosphate + ADP + H(+). It participates in carbohydrate metabolism; hexose metabolism. Its pathway is carbohydrate degradation; glycolysis; D-glyceraldehyde 3-phosphate and glycerone phosphate from D-glucose: step 1/4. Hexokinase is an allosteric enzyme inhibited by its product D-glucose 6-phosphate. Hexokinase activity is inhibited by N-acetyl-D-glucosamine. Catalyzes the phosphorylation of various hexoses, such as D-glucose, D-glucosamine, D-fructose, D-mannose and 2-deoxy-D-glucose, to hexose 6-phosphate (D-glucose 6-phosphate, D-glucosamine 6-phosphate, D-fructose 6-phosphate, D-mannose 6-phosphate and 2-deoxy-D-glucose 6-phosphate, respectively). Does not phosphorylate N-acetyl-D-glucosamine. Mediates the initial step of glycolysis by catalyzing phosphorylation of D-glucose to D-glucose 6-phosphate. Involved in innate immunity and inflammation by acting as a pattern recognition receptor for bacterial peptidoglycan. When released in the cytosol, N-acetyl-D-glucosamine component of bacterial peptidoglycan inhibits the hexokinase activity of HK1 and causes its dissociation from mitochondrial outer membrane, thereby activating the NLRP3 inflammasome. The chain is Hexokinase-1 from Pongo abelii (Sumatran orangutan).